The following is a 336-amino-acid chain: MTFVESMQRRAVLAQKRLVLPEACEQRTLEAARLIVFRNIAAKVFLVGCERDIKNTADRCGIDLTDMVVIDPSVSKHRDQFAERYFQKRKHKGISLAQAAEDMRDPLRFAAMMLDQGHADAMVAGAENTTARVLRAGLTIIGTLPSVKTASSCFVMDTNNPRLGGTRGLFIFSDCAVIPTPTAEQLADIACSAAESCRTFIGEEPTVALLSYSTKGSGGDSDENILRVREAVRILHERRVDFTFDGELQLDAALVPKITEKKAPHSPITGKVNTLVFPDLSSGNIGYKLVQRLSDADAYGPFLQGFAKPLSDLSRGCSVEDIVAACAVTLVQSNGR.

Belongs to the phosphate acetyltransferase and butyryltransferase family.

It localises to the cytoplasm. The catalysed reaction is acetyl-CoA + phosphate = acetyl phosphate + CoA. The protein operates within metabolic intermediate biosynthesis; acetyl-CoA biosynthesis; acetyl-CoA from acetate: step 2/2. The chain is Phosphate acetyltransferase (pta) from Treponema pallidum (strain Nichols).